We begin with the raw amino-acid sequence, 254 residues long: Glucosamine-6-phosphate deaminase (254 aa).

Asp63 functions as the Proton acceptor; for enolization step in the catalytic mechanism. Residue Asn129 is the For ring-opening step of the active site. His131 (proton acceptor; for ring-opening step) is an active-site residue. Catalysis depends on Glu136, which acts as the For ring-opening step.

It belongs to the glucosamine/galactosamine-6-phosphate isomerase family. NagB subfamily.

The enzyme catalyses alpha-D-glucosamine 6-phosphate + H2O = beta-D-fructose 6-phosphate + NH4(+). The protein operates within amino-sugar metabolism; N-acetylneuraminate degradation; D-fructose 6-phosphate from N-acetylneuraminate: step 5/5. In terms of biological role, catalyzes the reversible isomerization-deamination of glucosamine 6-phosphate (GlcN6P) to form fructose 6-phosphate (Fru6P) and ammonium ion. The polypeptide is Glucosamine-6-phosphate deaminase (Exiguobacterium sp. (strain ATCC BAA-1283 / AT1b)).